We begin with the raw amino-acid sequence, 500 residues long: Squalene epoxidase ERG1 (500 aa).

Residues 20–40 (EADVVVVGAGVFGCTMAFALA) traverse the membrane as a helical segment. Residues 30–31 (VF), 50–51 (ER), Arg58, Arg145, Asp332, and Met345 contribute to the FAD site. The next 2 membrane-spanning stretches (helical) occupy residues 450–470 (AFLA…LGIF) and 474–494 (LAII…IPIM).

It belongs to the squalene monooxygenase family. FAD serves as cofactor.

Its subcellular location is the microsome membrane. The protein localises to the endoplasmic reticulum membrane. It is found in the lipid droplet. The catalysed reaction is squalene + reduced [NADPH--hemoprotein reductase] + O2 = (S)-2,3-epoxysqualene + oxidized [NADPH--hemoprotein reductase] + H2O + H(+). It participates in terpene metabolism; lanosterol biosynthesis; lanosterol from farnesyl diphosphate: step 2/3. Its pathway is steroid metabolism; ergosterol biosynthesis. Functionally, squalene epoxidase; part of the third module of ergosterol biosynthesis pathway that includes the late steps of the pathway. ERG1 catalyzes the epoxidation of squalene into 2,3-epoxysqualene. The third module or late pathway involves the ergosterol synthesis itself through consecutive reactions that mainly occur in the endoplasmic reticulum (ER) membrane. Firstly, the squalene synthase ERG9 catalyzes the condensation of 2 farnesyl pyrophosphate moieties to form squalene, which is the precursor of all steroids. Squalene synthase is crucial for balancing the incorporation of farnesyl diphosphate (FPP) into sterol and nonsterol isoprene synthesis. Secondly, squalene is converted into lanosterol by the consecutive action of the squalene epoxidase ERG1 and the lanosterol synthase ERG7. Then, the delta(24)-sterol C-methyltransferase ERG6 methylates lanosterol at C-24 to produce eburicol. Eburicol is the substrate of the sterol 14-alpha demethylase encoded by CYP51A, CYP51B and CYP51C, to yield 4,4,24-trimethyl ergosta-8,14,24(28)-trienol. CYP51B encodes the enzyme primarily responsible for sterol 14-alpha-demethylation, and plays an essential role in ascospore formation. CYP51A encodes an additional sterol 14-alpha-demethylase, induced on ergosterol depletion and responsible for the intrinsic variation in azole sensitivity. The third CYP51 isoform, CYP51C, does not encode a sterol 14-alpha-demethylase, but is required for full virulence on host wheat ears. The C-14 reductase ERG24 then reduces the C14=C15 double bond which leads to 4,4-dimethylfecosterol. A sequence of further demethylations at C-4, involving the C-4 demethylation complex containing the C-4 methylsterol oxidases ERG25, the sterol-4-alpha-carboxylate 3-dehydrogenase ERG26 and the 3-keto-steroid reductase ERG27, leads to the production of fecosterol via 4-methylfecosterol. ERG28 has a role as a scaffold to help anchor ERG25, ERG26 and ERG27 to the endoplasmic reticulum. The C-8 sterol isomerase ERG2 then catalyzes the reaction which results in unsaturation at C-7 in the B ring of sterols and thus converts fecosterol to episterol. The sterol-C5-desaturases ERG3A and ERG3BB then catalyze the introduction of a C-5 double bond in the B ring to produce 5-dehydroepisterol. The C-22 sterol desaturases ERG5A and ERG5B further convert 5-dehydroepisterol into ergosta-5,7,22,24(28)-tetraen-3beta-ol by forming the C-22(23) double bond in the sterol side chain. Finally, ergosta-5,7,22,24(28)-tetraen-3beta-ol is substrate of the C-24(28) sterol reductase ERG4 to produce ergosterol. This is Squalene epoxidase ERG1 from Gibberella zeae (strain ATCC MYA-4620 / CBS 123657 / FGSC 9075 / NRRL 31084 / PH-1) (Wheat head blight fungus).